Consider the following 187-residue polypeptide: Endoribonuclease YbeY (187 aa).

Positions 151, 155, and 161 each coordinate Zn(2+).

The protein belongs to the endoribonuclease YbeY family. The cofactor is Zn(2+).

The protein resides in the cytoplasm. Functionally, single strand-specific metallo-endoribonuclease involved in late-stage 70S ribosome quality control and in maturation of the 3' terminus of the 16S rRNA. The sequence is that of Endoribonuclease YbeY from Prochlorococcus marinus (strain MIT 9313).